The following is a 265-amino-acid chain: NAD-capped RNA hydrolase NudC (265 aa).

Arg-76 contributes to the substrate binding site. Positions 106, 109, 124, and 127 each coordinate Zn(2+). Tyr-132 is a binding site for substrate. The 124-residue stretch at 133–256 folds into the Nudix hydrolase domain; sequence PRISPAMMVL…SIAHRLIRHA (124 aa). A divalent metal cation contacts are provided by Ala-166, Glu-182, and Glu-186. Positions 167-188 match the Nudix box motif; that stretch reads GFVEPGETLEECVHRETWEEVG. Position 200-207 (200-207) interacts with substrate; it reads QSWPFPHS. Residue Glu-227 participates in a divalent metal cation binding. Position 249 (Ala-249) interacts with substrate.

Belongs to the Nudix hydrolase family. NudC subfamily. Homodimer. Requires Mg(2+) as cofactor. Mn(2+) is required as a cofactor. Zn(2+) serves as cofactor.

It carries out the reaction a 5'-end NAD(+)-phospho-ribonucleoside in mRNA + H2O = a 5'-end phospho-adenosine-phospho-ribonucleoside in mRNA + beta-nicotinamide D-ribonucleotide + 2 H(+). It catalyses the reaction NAD(+) + H2O = beta-nicotinamide D-ribonucleotide + AMP + 2 H(+). The catalysed reaction is NADH + H2O = reduced beta-nicotinamide D-ribonucleotide + AMP + 2 H(+). MRNA decapping enzyme that specifically removes the nicotinamide adenine dinucleotide (NAD) cap from a subset of mRNAs by hydrolyzing the diphosphate linkage to produce nicotinamide mononucleotide (NMN) and 5' monophosphate mRNA. The NAD-cap is present at the 5'-end of some mRNAs and stabilizes RNA against 5'-processing. Has preference for mRNAs with a 5'-end purine. Catalyzes the hydrolysis of a broad range of dinucleotide pyrophosphates. The polypeptide is NAD-capped RNA hydrolase NudC (Chromobacterium violaceum (strain ATCC 12472 / DSM 30191 / JCM 1249 / CCUG 213 / NBRC 12614 / NCIMB 9131 / NCTC 9757 / MK)).